Here is an 873-residue protein sequence, read N- to C-terminus: K(+)/H(+) antiporter 1 (873 aa).

Topologically, residues 1-23 (MANTVGGILSGVNPFHYNSSSPL) are extracellular. A helical transmembrane segment spans residues 24 to 44 (TLFLFQACLILLVCNLIHIPF). Topologically, residues 45–51 (SMMRQPK) are cytoplasmic. Residues 52-72 (VISEVISGVILGPTIFGQIPN) traverse the membrane as a helical segment. Residues 73–82 (YTNTIFPTSS) are Extracellular-facing. A helical membrane pass occupies residues 83-103 (IPGLNLVANLGIILFMFFLGL). At 104–116 (EVDIAFIKKHLKK) the chain is on the cytoplasmic side. The helical transmembrane segment at 117-137 (ALVIGIVTLAVPFGFGCLLAI) threads the bilayer. The Extracellular portion of the chain corresponds to 138–154 (PLFHTYANKTEGERHIK). Residues 155–175 (FSVFMVFIAVSISVTAFPVLC) traverse the membrane as a helical segment. Residues 176–188 (RILNELRLIKDRA) are Cytoplasmic-facing. Residues 189-209 (GIVVLAAGIINDIMGWILLAL) form a helical membrane-spanning segment. Over 210 to 220 (SIILSSAEGSP) the chain is Extracellular. Residues 221–241 (VNTVYILLITFAWFLIYFFPL) traverse the membrane as a helical segment. At 242–267 (KYLLRWVLIRTHELDRSKPSPLATMC) the chain is on the cytoplasmic side. A helical transmembrane segment spans residues 268 to 288 (ILFIMFISAYFTDIIGVHPIF). At 289 to 316 (GAFIAGLVVPRDDHYVVKLTERMEDIPN) the chain is on the extracellular side. A helical transmembrane segment spans residues 317 to 337 (IVFIPIYFAVAGLNVDLTLLN). Residues 338–341 (EGRD) are Cytoplasmic-facing. Residues 342–362 (WGYVFATIGIAIFTKIISGTL) traverse the membrane as a helical segment. Residues 363-375 (TAKLTGLFWREAT) are Extracellular-facing. A helical membrane pass occupies residues 376–396 (AAGVLMSCKGIVEIVVLTVGL). At 397-404 (NAGIISRK) the chain is on the cytoplasmic side. A helical membrane pass occupies residues 405 to 425 (IFGMFVLMALVSTFVTTPLTQ). Over 426-726 (LVYPDSYRDG…DRFKRKRFNL (301 aa)) the chain is Extracellular. Phosphoserine is present on Ser557. A Glycyl lysine isopeptide (Lys-Gly) (interchain with G-Cter in ubiquitin) cross-link involves residue Lys562. The chain crosses the membrane as a helical span at residues 727-747 (LLPKPYLTQSDYLGLYLLLLI). The Cytoplasmic portion of the chain corresponds to 748-873 (CYRDGYNNDN…TLIVHHFSSE (126 aa)).

This sequence belongs to the monovalent cation:proton antiporter 2 (CPA2) transporter (TC 2.A.37) family.

The protein resides in the membrane. Potassium-proton antiport. This Saccharomyces cerevisiae (strain ATCC 204508 / S288c) (Baker's yeast) protein is K(+)/H(+) antiporter 1 (KHA1).